The sequence spans 174 residues: Peptide deformylase (174 aa).

Fe cation is bound by residues C96 and H138. E139 is a catalytic residue. A Fe cation-binding site is contributed by H142.

The protein belongs to the polypeptide deformylase family. Fe(2+) is required as a cofactor.

The enzyme catalyses N-terminal N-formyl-L-methionyl-[peptide] + H2O = N-terminal L-methionyl-[peptide] + formate. Removes the formyl group from the N-terminal Met of newly synthesized proteins. Requires at least a dipeptide for an efficient rate of reaction. N-terminal L-methionine is a prerequisite for activity but the enzyme has broad specificity at other positions. In Helicobacter pylori (strain J99 / ATCC 700824) (Campylobacter pylori J99), this protein is Peptide deformylase.